The chain runs to 236 residues: tRNA (guanine-N(1)-)-methyltransferase (236 aa).

Residues Gly112 and Val132–Leu137 each bind S-adenosyl-L-methionine.

The protein belongs to the RNA methyltransferase TrmD family. Homodimer.

Its subcellular location is the cytoplasm. The catalysed reaction is guanosine(37) in tRNA + S-adenosyl-L-methionine = N(1)-methylguanosine(37) in tRNA + S-adenosyl-L-homocysteine + H(+). Specifically methylates guanosine-37 in various tRNAs. This is tRNA (guanine-N(1)-)-methyltransferase from Campylobacter curvus (strain 525.92).